A 452-amino-acid chain; its full sequence is Phosphoglucosamine mutase (452 aa).

Residue Ser104 is the Phosphoserine intermediate of the active site. Positions 104, 241, 243, and 245 each coordinate Mg(2+). Ser104 carries the post-translational modification Phosphoserine.

This sequence belongs to the phosphohexose mutase family. It depends on Mg(2+) as a cofactor. Post-translationally, activated by phosphorylation.

It catalyses the reaction alpha-D-glucosamine 1-phosphate = D-glucosamine 6-phosphate. In terms of biological role, catalyzes the conversion of glucosamine-6-phosphate to glucosamine-1-phosphate. In Arthrobacter sp. (strain FB24), this protein is Phosphoglucosamine mutase.